The sequence spans 268 residues: MEYTLQTLVFCSFKGGTGKTTLSLNVGCNLAQFLGKRVLLIDLDPQSNLSSGLGASIEGNHKGLHEVMCASNDLKSIICKTKKTGVDIIPASFLSEQFREFSTNGIPSSNLRLFLDEYCSPLYDVCIVDTPPSLGGLTKEAFIAGDKLIVCLIPEPFSILGLQKIREFLISIGKPEEEHILGVALSFWDDRSSTNQTYIDIIESIYENKIFSTKIRRDISLSRSLLKEDSVINVYPTSRAATDILNLTHEISALLNSKHKQDFSQRTL.

13–20 lines the ATP pocket; sequence FKGGTGKT.

This sequence belongs to the ParA family.

In Chlamydia muridarum (strain MoPn / Nigg), this protein is Virulence plasmid ParA family protein pGP5-D.